We begin with the raw amino-acid sequence, 143 residues long: Anti-sigma F factor (143 aa).

This sequence belongs to the anti-sigma-factor family.

The enzyme catalyses L-seryl-[protein] + ATP = O-phospho-L-seryl-[protein] + ADP + H(+). It catalyses the reaction L-threonyl-[protein] + ATP = O-phospho-L-threonyl-[protein] + ADP + H(+). Its function is as follows. Binds to sigma F and blocks its ability to form an RNA polymerase holoenzyme (E-sigma F). Phosphorylates SpoIIAA on a serine residue. This phosphorylation may enable SpoIIAA to act as an anti-anti-sigma factor that counteracts SpoIIAB and thus releases sigma F from inhibition. The protein is Anti-sigma F factor of Clostridium botulinum (strain Alaska E43 / Type E3).